The following is a 110-amino-acid chain: Large ribosomal subunit protein uL22 (110 aa).

It belongs to the universal ribosomal protein uL22 family. Part of the 50S ribosomal subunit.

In terms of biological role, this protein binds specifically to 23S rRNA; its binding is stimulated by other ribosomal proteins, e.g. L4, L17, and L20. It is important during the early stages of 50S assembly. It makes multiple contacts with different domains of the 23S rRNA in the assembled 50S subunit and ribosome. The globular domain of the protein is located near the polypeptide exit tunnel on the outside of the subunit, while an extended beta-hairpin is found that lines the wall of the exit tunnel in the center of the 70S ribosome. This is Large ribosomal subunit protein uL22 from Oleidesulfovibrio alaskensis (strain ATCC BAA-1058 / DSM 17464 / G20) (Desulfovibrio alaskensis).